The sequence spans 610 residues: Elongation factor 4 (610 aa).

The tr-type G domain maps to serine 7 to lysine 189. GTP is bound by residues aspartate 19–threonine 24 and asparagine 136–aspartate 139.

Belongs to the TRAFAC class translation factor GTPase superfamily. Classic translation factor GTPase family. LepA subfamily.

It is found in the cell inner membrane. It catalyses the reaction GTP + H2O = GDP + phosphate + H(+). Its function is as follows. Required for accurate and efficient protein synthesis under certain stress conditions. May act as a fidelity factor of the translation reaction, by catalyzing a one-codon backward translocation of tRNAs on improperly translocated ribosomes. Back-translocation proceeds from a post-translocation (POST) complex to a pre-translocation (PRE) complex, thus giving elongation factor G a second chance to translocate the tRNAs correctly. Binds to ribosomes in a GTP-dependent manner. This Thermus thermophilus (strain ATCC BAA-163 / DSM 7039 / HB27) protein is Elongation factor 4.